The following is a 333-amino-acid chain: Ribosomal RNA small subunit methyltransferase H (333 aa).

Residues 43-45 (GGH), Asp62, Tyr89, Asp110, and Gln117 contribute to the S-adenosyl-L-methionine site. The segment at 312-333 (RLRAARRIRTTPTRPSPRRRRP) is disordered.

The protein belongs to the methyltransferase superfamily. RsmH family.

It localises to the cytoplasm. The catalysed reaction is cytidine(1402) in 16S rRNA + S-adenosyl-L-methionine = N(4)-methylcytidine(1402) in 16S rRNA + S-adenosyl-L-homocysteine + H(+). In terms of biological role, specifically methylates the N4 position of cytidine in position 1402 (C1402) of 16S rRNA. The chain is Ribosomal RNA small subunit methyltransferase H from Beutenbergia cavernae (strain ATCC BAA-8 / DSM 12333 / CCUG 43141 / JCM 11478 / NBRC 16432 / NCIMB 13614 / HKI 0122).